A 1503-amino-acid chain; its full sequence is Protein Skeletor, isoforms D/E (1503 aa).

The N-terminal stretch at methionine 1–alanine 28 is a signal peptide. 2 DM13 domains span residues glycine 34 to proline 143 and proline 151 to proline 258. A DOMON domain is found at leucine 287–glycine 419. Disordered regions lie at residues proline 451–proline 491, asparagine 830–isoleucine 857, isoleucine 1086–serine 1106, and glutamate 1426–alanine 1503. The span at asparagine 830–glutamine 840 shows a compositional bias: low complexity. The segment covering serine 1452–threonine 1491 has biased composition (low complexity).

In terms of assembly, interacts with Chro and Mgtor as part of a macromolecular complex forming the spindle matrix. Chro colocalizes with Skeletor (Skel) on the chromosomes at interphase and on spindle during metaphase.

Its subcellular location is the cytoplasm. It localises to the cytoskeleton. It is found in the spindle. The protein resides in the nucleus. The protein localises to the nucleolus. Its subcellular location is the chromosome. Functionally, provides structural support to stabilize and organize the microtubule spindle during mitosis (within embryonic somatic cells) and meiosis (within spermatocytes). The role in mitosis regulation depends on the Ran pathway. This Drosophila melanogaster (Fruit fly) protein is Protein Skeletor, isoforms D/E.